Consider the following 352-residue polypeptide: UDP-N-acetylglucosamine--N-acetylmuramyl-(pentapeptide) pyrophosphoryl-undecaprenol N-acetylglucosamine transferase (352 aa).

Residues 13 to 15, Asn125, Arg161, Ser189, Ile242, 261 to 266, and Gln286 contribute to the UDP-N-acetyl-alpha-D-glucosamine site; these read TGG and ALTVSE.

It belongs to the glycosyltransferase 28 family. MurG subfamily.

The protein localises to the cell inner membrane. The catalysed reaction is di-trans,octa-cis-undecaprenyl diphospho-N-acetyl-alpha-D-muramoyl-L-alanyl-D-glutamyl-meso-2,6-diaminopimeloyl-D-alanyl-D-alanine + UDP-N-acetyl-alpha-D-glucosamine = di-trans,octa-cis-undecaprenyl diphospho-[N-acetyl-alpha-D-glucosaminyl-(1-&gt;4)]-N-acetyl-alpha-D-muramoyl-L-alanyl-D-glutamyl-meso-2,6-diaminopimeloyl-D-alanyl-D-alanine + UDP + H(+). The protein operates within cell wall biogenesis; peptidoglycan biosynthesis. Its function is as follows. Cell wall formation. Catalyzes the transfer of a GlcNAc subunit on undecaprenyl-pyrophosphoryl-MurNAc-pentapeptide (lipid intermediate I) to form undecaprenyl-pyrophosphoryl-MurNAc-(pentapeptide)GlcNAc (lipid intermediate II). The protein is UDP-N-acetylglucosamine--N-acetylmuramyl-(pentapeptide) pyrophosphoryl-undecaprenol N-acetylglucosamine transferase of Erwinia tasmaniensis (strain DSM 17950 / CFBP 7177 / CIP 109463 / NCPPB 4357 / Et1/99).